The following is a 193-amino-acid chain: Bifunctional protein PyrR (193 aa).

Substrate is bound by residues 57 to 58, Arg-98, 119 to 127, Arg-152, and Val-176; these read TR and DDVLYSGRS. Residues 115–127 carry the PRPP-binding motif; the sequence is VILVDDVLYSGRS.

It belongs to the purine/pyrimidine phosphoribosyltransferase family. PyrR subfamily.

It catalyses the reaction UMP + diphosphate = 5-phospho-alpha-D-ribose 1-diphosphate + uracil. Functionally, regulates the transcription of the pyrimidine nucleotide (pyr) operon in response to exogenous pyrimidines. Its function is as follows. Also displays a weak uracil phosphoribosyltransferase activity which is not physiologically significant. The chain is Bifunctional protein PyrR from Mycobacterium bovis (strain ATCC BAA-935 / AF2122/97).